A 139-amino-acid polypeptide reads, in one-letter code: Putative translationally-controlled tumor protein-like protein TPT1P8 (139 aa).

A TCTP domain is found at 1 to 139 (MIIFQDLISH…KTTSSLLVKT (139 aa)). The span at 40–51 (TGNTDDSLIGRN) shows a compositional bias: polar residues. The tract at residues 40 to 60 (TGNTDDSLIGRNSSSESTEDE) is disordered.

The protein belongs to the TCTP family.

This is Putative translationally-controlled tumor protein-like protein TPT1P8 (TPT1P8) from Homo sapiens (Human).